A 699-amino-acid polypeptide reads, in one-letter code: TBC1 domain family member 23 (699 aa).

The Rab-GAP TBC domain occupies 44–225 (PLPADLRAKV…AIWDGYLQQA (182 aa)). The residue at position 300 (Ser300) is a Phosphoserine. In terms of domain architecture, Rhodanese spans 334–446 (EGVRFFVVDC…LQQHLADINV (113 aa)). Over residues 459–479 (STSGSRSSINSVDGESPNGSS) the composition is skewed to polar residues. The segment at 459 to 483 (STSGSRSSINSVDGESPNGSSDRGM) is disordered. Phosphoserine is present on residues Ser469, Ser474, and Ser507. Thr514 carries the post-translational modification Phosphothreonine. The interval 514–573 (TPVDRMSFNLPWPDRSCTERHVSSSDRVGKPYRGVKPVFSIGDEEEYDTDEIDSSSMSDD) is may mediate the interaction with C17orf75, FAM91A1 and WDR11. The segment at 514–699 (TPVDRMSFNL…IMKVLDALES (186 aa)) is may mediate the interaction with WASHC1. Phosphoserine is present on residues Ser520 and Ser571. The segment at 574–699 (DRKEVVNIQT…IMKVLDALES (126 aa)) is may mediate the interaction with FKBP15 and WASHC2; required for endosome to Golgi trafficking.

As to quaternary structure, directly interacts with GOLGA1 and GOLGA4. Interacts with FAM91A1, C17ORF75 and WDR11; the interaction recruits TBC1D23 to AP-1-derived vesicles. Directly interacts with WASHC1 and WASHC2A/FAM21A. Interacts with FKBP15. Isoform 1: Widely expressed, including in fetal adult brain (corpus callosum, pons, cerebellum), spinal cord, heart, skeletal muscle, thymus and bone marrow, and at lower levels in spleen. Hardly detected in liver, kidney, colon and testis. Isoform 2: Expressed at high levels in liver, kidney, colon and testis. Hardly detected in tissues expressing high levels of isoform 1. Expressed at low levels in spleen.

Its subcellular location is the golgi apparatus. It is found in the trans-Golgi network. The protein localises to the cytoplasmic vesicle. Its function is as follows. Putative Rab GTPase-activating protein which plays a role in vesicular trafficking. Involved in endosome-to-Golgi trafficking. Acts as a bridging protein by binding simultaneously to golgins, including GOLGA1 and GOLGA4, located at the trans-Golgi, and to the WASH complex, located on endosome-derived vesicles. Together with WDR11 complex facilitates the golgin-mediated capture of vesicles generated using AP-1. Plays a role in brain development, including in cortical neuron positioning. May also be important for neurite outgrowth, possibly through its involvement in membrane trafficking and cargo delivery, 2 processes that are essential for axonal and dendritic growth. May act as a general inhibitor of innate immunity signaling, strongly inhibiting multiple TLR and dectin/CLEC7A-signaling pathways. Does not alter initial activation events, but instead affects maintenance of inflammatory gene expression several hours after bacterial lipopolysaccharide (LPS) challenge. The sequence is that of TBC1 domain family member 23 (TBC1D23) from Homo sapiens (Human).